A 441-amino-acid chain; its full sequence is MANNNVYSVLKSLLLLLHLVFLSKQHVDSASIVKFLPGFEGPLPFELETGYIGVGEEEEVQLFYYFIKSERNPKEDPLLLWLTGGPGCSAISGLLYQNGPLAMKLDVYNGTLPSLVSTTYSWTKTSSMIFLDQPVGTGFSYSRTQLFNKPSDTGEAKRIHEFLQKWLGKHQEFSSNPFYVGGDSYSGLVVPATVQEISKGNCQCCNRPINLQGYVLGNPLTDCVYDCNYRVPFAHKMALISDELYESLKRTCRGEYVNVHPHDTECLKFVEEFNKLTNRVCERHILHSCCETETPSCYSYRFMLTTYWANDETVRKALQINKESIGEWTRCYRGIPYNHDIKSSVPYHMNNSIDGYRSLIYSGDHDIQVPFLGTQAWIRSLNYSIIDDWRPWMIKDQIAGYTTSYVNKMTFATVTGGGHTAEFTPKETFMMFQRWINGQPL.

The N-terminal stretch at 1–29 (MANNNVYSVLKSLLLLLHLVFLSKQHVDS) is a signal peptide. 3 disulfide bridges follow: C88/C331, C252/C266, and C290/C297. N-linked (GlcNAc...) asparagine glycosylation is present at N109. S184 is an active-site residue. The N-linked (GlcNAc...) asparagine glycan is linked to N350. D366 is an active-site residue. N-linked (GlcNAc...) asparagine glycosylation occurs at N382. H419 is an active-site residue.

This sequence belongs to the peptidase S10 family. As to expression, ubiquitous.

It localises to the secreted. Its function is as follows. Probable carboxypeptidase. The sequence is that of Serine carboxypeptidase-like 4 (SCPL4) from Arabidopsis thaliana (Mouse-ear cress).